The chain runs to 779 residues: MKRKLFWICAVAMGMSAFPSFMTQATPATQPLINAEPAVAAQTEQNPQVGQVMPGVQGADAPVVAQNGPSRDVKLTFAQIAPPPGSMVLRGINPNGSIEFGMRSDEVVTKAMLNLEYTPSPSLLPVQSQLKVYLNDELMGVLPVTKEQLGKKTLAQMPINPLFISDFNRVRLEFVGHYQDVCEKPASTTLWLDVGRSSGLDLTYQTLNVKNDLSHFPVPFFDPSDNRTNTLPMVFAGAPDVGLQQASAIVASWFGSRSGWRGQNFPVLYNQLPDRNAIVFATNDKRPDFLRDHPAVKAPVIEMINHPQNPYVKLLVVFGRDDKDLLQAAKGIAQGNILFRGESVVVNEVKPLLPRKPYDAPNWVRTDRPVTFGELKTYEEQLQSSGLEPAAINVSLNLPPDLYLMRSTGIDMDINYRYTMPPVKDSSRMDISLNNQFLQSFNLSSKQEANRLLLRIPVLQGLLDGKTDVSIPALKLGATNQLRFDFEYMNPMPGGSVDNCITFQPVQNHVVIGDDSTIDFSKYYHFIPMPDLRAFANAGFPFSRMADLSQTITVMPKAPNEAQMETLLNTVGFIGAQTGFPAINLTVTDDGSTIQGKDADIMIIGGIPDKLKDDKQIDLLVQATESWVKTPMRQTPFPGIVPDESDRAAETRSTLTSSGAMAAVIGFQSPYNDQRSVIALLADSPRGYEMLNDAVNDSGKRATMFGSVAVIRESGINSLRVGDVYYVGHLPWFERVWYALANHPILLAVLAAISVILLAWVLWRLLRIISRRRLNPDNE.

A signal peptide spans methionine 1 to alanine 25. Topologically, residues threonine 26–asparagine 742 are periplasmic. A helical membrane pass occupies residues histidine 743–tryptophan 763. At arginine 764–glutamate 779 the chain is on the cytoplasmic side.

This sequence belongs to the AcsB/BcsB family. As to quaternary structure, tightly associated with the cellulose synthase catalytic subunit.

It is found in the cell inner membrane. The protein operates within glycan metabolism; bacterial cellulose biosynthesis. Binds the cellulose synthase activator, bis-(3'-5') cyclic diguanylic acid (c-di-GMP). The chain is Cyclic di-GMP-binding protein (bcsB) from Escherichia coli (strain K12).